A 464-amino-acid polypeptide reads, in one-letter code: Glutamate--tRNA ligase 1 (464 aa).

The 'HIGH' region motif lies at 8–18; sequence PSPTGHLHVGG. Residues 231–235 carry the 'KMSKS' region motif; the sequence is PLSKR. Position 234 (lysine 234) interacts with ATP.

Belongs to the class-I aminoacyl-tRNA synthetase family. Glutamate--tRNA ligase type 1 subfamily. As to quaternary structure, monomer.

It is found in the cytoplasm. It catalyses the reaction tRNA(Glu) + L-glutamate + ATP = L-glutamyl-tRNA(Glu) + AMP + diphosphate. Functionally, catalyzes the attachment of glutamate to tRNA(Glu) in a two-step reaction: glutamate is first activated by ATP to form Glu-AMP and then transferred to the acceptor end of tRNA(Glu). The sequence is that of Glutamate--tRNA ligase 1 from Thermotoga petrophila (strain ATCC BAA-488 / DSM 13995 / JCM 10881 / RKU-1).